Here is a 212-residue protein sequence, read N- to C-terminus: 2,3-bisphosphoglycerate-dependent phosphoglycerate mutase (212 aa).

Substrate-binding positions include 9–16 (RHGQSEWN), 22–23 (TG), Arg61, 88–91 (ERDY), Lys99, 115–116 (RR), and 159–160 (GN). Residue His10 is the Tele-phosphohistidine intermediate of the active site. Glu88 acts as the Proton donor/acceptor in catalysis.

It belongs to the phosphoglycerate mutase family. BPG-dependent PGAM subfamily. As to quaternary structure, homodimer.

The enzyme catalyses (2R)-2-phosphoglycerate = (2R)-3-phosphoglycerate. The protein operates within carbohydrate degradation; glycolysis; pyruvate from D-glyceraldehyde 3-phosphate: step 3/5. In terms of biological role, catalyzes the interconversion of 2-phosphoglycerate and 3-phosphoglycerate. This Methylorubrum populi (strain ATCC BAA-705 / NCIMB 13946 / BJ001) (Methylobacterium populi) protein is 2,3-bisphosphoglycerate-dependent phosphoglycerate mutase.